A 62-amino-acid polypeptide reads, in one-letter code: Sperm histone (62 aa).

A disordered region spans residues 1 to 62; it reads MARYRRSRTR…GSRRRRRRRY (62 aa). A Phosphothreonine modification is found at T9.

This sequence belongs to the protamine P1 family. In terms of tissue distribution, testis.

Its subcellular location is the nucleus. It localises to the chromosome. In terms of biological role, protamines substitute for histones in the chromatin of sperm during the haploid phase of spermatogenesis. They compact sperm DNA into a highly condensed, stable and inactive complex. The chain is Sperm histone from Gallus gallus (Chicken).